The sequence spans 279 residues: Shikimate dehydrogenase (NADP(+)) (279 aa).

Shikimate contacts are provided by residues Ser-19–Ser-21 and Thr-66. The active-site Proton acceptor is Lys-70. Residues Asn-91 and Asp-106 each contribute to the shikimate site. Residues Gly-129 to Ala-133, Asn-152 to Arg-157, and Ile-218 contribute to the NADP(+) site. Tyr-220 serves as a coordination point for shikimate. Gly-241 is a binding site for NADP(+).

It belongs to the shikimate dehydrogenase family. Homodimer.

The catalysed reaction is shikimate + NADP(+) = 3-dehydroshikimate + NADPH + H(+). It participates in metabolic intermediate biosynthesis; chorismate biosynthesis; chorismate from D-erythrose 4-phosphate and phosphoenolpyruvate: step 4/7. Its function is as follows. Involved in the biosynthesis of the chorismate, which leads to the biosynthesis of aromatic amino acids. Catalyzes the reversible NADPH linked reduction of 3-dehydroshikimate (DHSA) to yield shikimate (SA). The chain is Shikimate dehydrogenase (NADP(+)) from Gluconobacter oxydans (strain 621H) (Gluconobacter suboxydans).